We begin with the raw amino-acid sequence, 218 residues long: Large ribosomal subunit protein bL25 (218 aa).

The segment at 186-218 is disordered; sequence AVEEEVPAEDEEIMPEPEVIGEEDEGDEEEPEE.

It belongs to the bacterial ribosomal protein bL25 family. CTC subfamily. Part of the 50S ribosomal subunit; part of the 5S rRNA/L5/L18/L25 subcomplex. Contacts the 5S rRNA. Binds to the 5S rRNA independently of L5 and L18.

Functionally, this is one of the proteins that binds to the 5S RNA in the ribosome where it forms part of the central protuberance. The protein is Large ribosomal subunit protein bL25 of Halothermothrix orenii (strain H 168 / OCM 544 / DSM 9562).